Reading from the N-terminus, the 148-residue chain is 3-hydroxyacyl-[acyl-carrier-protein] dehydratase FabZ (148 aa).

The active site involves H48.

Belongs to the thioester dehydratase family. FabZ subfamily.

It localises to the cytoplasm. It carries out the reaction a (3R)-hydroxyacyl-[ACP] = a (2E)-enoyl-[ACP] + H2O. Involved in unsaturated fatty acids biosynthesis. Catalyzes the dehydration of short chain beta-hydroxyacyl-ACPs and long chain saturated and unsaturated beta-hydroxyacyl-ACPs. This is 3-hydroxyacyl-[acyl-carrier-protein] dehydratase FabZ from Campylobacter curvus (strain 525.92).